A 732-amino-acid polypeptide reads, in one-letter code: Subtilisin-like protease SBT4.13 (732 aa).

The first 24 residues, 1-24, serve as a signal peptide directing secretion; that stretch reads MATLAASSSLLSCLLVLFLSSVSA. Positions 25 to 109 are cleaved as a propeptide — activation peptide; that stretch reads VTDDKQVYIV…VFPNKKLQLQ (85 aa). The Inhibitor I9 domain occupies 31–108; it reads VYIVYMGSLS…SVFPNKKLQL (78 aa). The Peptidase S8 domain maps to 113–579; it reads SWDFMGLKEG…SGHVDPIAAS (467 aa). Aspartate 141 functions as the Charge relay system in the catalytic mechanism. Residue asparagine 172 is glycosylated (N-linked (GlcNAc...) asparagine). Residue histidine 196 is the Charge relay system of the active site. Residue asparagine 219 is glycosylated (N-linked (GlcNAc...) asparagine). Residues 352 to 436 enclose the PA domain; sequence DYPLVYGKSA…GLLTEDFESL (85 aa). Asparagine 458 carries N-linked (GlcNAc...) asparagine glycosylation. Serine 518 serves as the catalytic Charge relay system. Residues asparagine 555, asparagine 600, asparagine 648, and asparagine 658 are each glycosylated (N-linked (GlcNAc...) asparagine).

Belongs to the peptidase S8 family. In terms of processing, the C-terminal propeptide is autocleaved.

Its subcellular location is the secreted. In Arabidopsis thaliana (Mouse-ear cress), this protein is Subtilisin-like protease SBT4.13.